Here is a 354-residue protein sequence, read N- to C-terminus: DNA polymerase IV (354 aa).

The UmuC domain occupies 6–187; the sequence is IIHIDCDCFY…LPVTKLHGVG (182 aa). Mg(2+)-binding residues include Asp-10 and Asp-105. Glu-106 is an active-site residue.

It belongs to the DNA polymerase type-Y family. As to quaternary structure, monomer. Requires Mg(2+) as cofactor.

Its subcellular location is the cytoplasm. It catalyses the reaction DNA(n) + a 2'-deoxyribonucleoside 5'-triphosphate = DNA(n+1) + diphosphate. Functionally, poorly processive, error-prone DNA polymerase involved in untargeted mutagenesis. Copies undamaged DNA at stalled replication forks, which arise in vivo from mismatched or misaligned primer ends. These misaligned primers can be extended by PolIV. Exhibits no 3'-5' exonuclease (proofreading) activity. May be involved in translesional synthesis, in conjunction with the beta clamp from PolIII. The polypeptide is DNA polymerase IV (Pseudomonas syringae pv. syringae (strain B728a)).